We begin with the raw amino-acid sequence, 300 residues long: Mitochondrial tricarboxylate transporter 1 (300 aa).

Solcar repeat units follow at residues 8 to 98 (VSPS…FRSM), 107 to 197 (LSNS…LRDW), and 209 to 294 (INWL…VVWL). The next 6 membrane-spanning stretches (helical) occupy residues 11 to 31 (SVSV…TFPI), 67 to 87 (PKGL…KAGV), 114 to 134 (LAGM…SETI), 172 to 191 (GVVP…LGTY), 208 to 228 (LINW…AVYG), and 277 to 297 (LIVS…LLAG).

Belongs to the mitochondrial carrier (TC 2.A.29) family.

The protein localises to the mitochondrion membrane. Mitochondrial tricarboxylate transporter; part of the gene cluster that mediates the biosynthesis of itaconic acid and 2-hydroxyparaconate. Cis-aconitate is secreted by the mitochondrial tricarboxylate transporter MTT1. In the cytosol cis-aconitate is converted into trans-aconitate via isomerization by the aconitate-delta-isomerase ADI1. Decarboxylation of trans-aconitate by the trans-aconitate decarboxylase TAD1 then leads then to the production of itaconic acid. The cytochrome P450 monooxygenase CYP3 further converts itaconate to 2-hydroxyparaconate via oxidation of the double bond, leading to a transient epoxide, which can subsequently be lactonized to produce 2-hydroxyparaconate. Secretion of itaconate and possibly 2-hydroxyparaconate into the medium is mediated by the major facilitator ITP1. The glyoxalase domain-containing protein RDO1 is not involved in the biosynthesis of itaconate and 2-hydroxyparaconate, however, it might play a role in the further conversion of 2-hydroxyparaconate to itatartarate. In Mycosarcoma maydis (Corn smut fungus), this protein is Mitochondrial tricarboxylate transporter 1.